Reading from the N-terminus, the 32-residue chain is Cytochrome b6-f complex subunit 7 (32 aa).

Residues 9–27 form a helical membrane-spanning segment; that stretch reads AAVFWVLIPVGLLGGVLLL.

Belongs to the PetM family. The 4 large subunits of the cytochrome b6-f complex are cytochrome b6, subunit IV (17 kDa polypeptide, PetD), cytochrome f and the Rieske protein, while the 4 small subunits are PetG, PetL, PetM and PetN. The complex functions as a dimer.

Its subcellular location is the cellular thylakoid membrane. Its function is as follows. Component of the cytochrome b6-f complex, which mediates electron transfer between photosystem II (PSII) and photosystem I (PSI), cyclic electron flow around PSI, and state transitions. This Prochlorococcus marinus (strain NATL1A) protein is Cytochrome b6-f complex subunit 7.